We begin with the raw amino-acid sequence, 362 residues long: Protein-glutamate methylesterase/protein-glutamine glutaminase (362 aa).

A Response regulatory domain is found at 5–122 (KVLCVDDSAL…RDGMLDYSEK (118 aa)). D56 carries the 4-aspartylphosphate modification. The 193-residue stretch at 163-355 (LLSTEKLIIV…RRVMARLSSM (193 aa)) folds into the CheB-type methylesterase domain. Catalysis depends on residues S175, H201, and D297.

Belongs to the CheB family. Post-translationally, phosphorylated by CheA. Phosphorylation of the N-terminal regulatory domain activates the methylesterase activity.

The protein resides in the cytoplasm. The enzyme catalyses [protein]-L-glutamate 5-O-methyl ester + H2O = L-glutamyl-[protein] + methanol + H(+). The catalysed reaction is L-glutaminyl-[protein] + H2O = L-glutamyl-[protein] + NH4(+). Functionally, involved in chemotaxis. Part of a chemotaxis signal transduction system that modulates chemotaxis in response to various stimuli. Catalyzes the demethylation of specific methylglutamate residues introduced into the chemoreceptors (methyl-accepting chemotaxis proteins or MCP) by CheR. Also mediates the irreversible deamidation of specific glutamine residues to glutamic acid. The polypeptide is Protein-glutamate methylesterase/protein-glutamine glutaminase (Paraburkholderia xenovorans (strain LB400)).